A 58-amino-acid chain; its full sequence is Protein translocase subunit SecE (58 aa).

A helical membrane pass occupies residues 36–56 (ILLIGFIGFLMFAIMSLLPGV).

The protein belongs to the SecE/SEC61-gamma family. In terms of assembly, component of the Sec protein translocase complex. Heterotrimer consisting of SecY (alpha), SecG (beta) and SecE (gamma) subunits. The heterotrimers can form oligomers, although 1 heterotrimer is thought to be able to translocate proteins. Interacts with the ribosome. May interact with SecDF, and other proteins may be involved.

It localises to the cell membrane. Essential subunit of the Sec protein translocation channel SecYEG. Clamps together the 2 halves of SecY. May contact the channel plug during translocation. The protein is Protein translocase subunit SecE of Halorubrum lacusprofundi (strain ATCC 49239 / DSM 5036 / JCM 8891 / ACAM 34).